The following is a 360-amino-acid chain: Phospho-N-acetylmuramoyl-pentapeptide-transferase (360 aa).

10 helical membrane passes run 27 to 47, 70 to 90, 93 to 113, 134 to 154, 168 to 188, 205 to 225, 239 to 259, 262 to 282, 288 to 308, and 337 to 357; these read GALI…ISSL, GTPT…SILW, LSSV…AIGF, LALE…AGQE, LLLN…VGAG, VMVA…AIFA, LSVI…FNAP, AIFM…TVAV, IVLA…IIQV, and QVVI…LSTL.

The protein belongs to the glycosyltransferase 4 family. MraY subfamily. Mg(2+) is required as a cofactor.

The protein localises to the cell inner membrane. The catalysed reaction is UDP-N-acetyl-alpha-D-muramoyl-L-alanyl-gamma-D-glutamyl-meso-2,6-diaminopimeloyl-D-alanyl-D-alanine + di-trans,octa-cis-undecaprenyl phosphate = di-trans,octa-cis-undecaprenyl diphospho-N-acetyl-alpha-D-muramoyl-L-alanyl-D-glutamyl-meso-2,6-diaminopimeloyl-D-alanyl-D-alanine + UMP. The protein operates within cell wall biogenesis; peptidoglycan biosynthesis. Its function is as follows. Catalyzes the initial step of the lipid cycle reactions in the biosynthesis of the cell wall peptidoglycan: transfers peptidoglycan precursor phospho-MurNAc-pentapeptide from UDP-MurNAc-pentapeptide onto the lipid carrier undecaprenyl phosphate, yielding undecaprenyl-pyrophosphoryl-MurNAc-pentapeptide, known as lipid I. The chain is Phospho-N-acetylmuramoyl-pentapeptide-transferase from Chelativorans sp. (strain BNC1).